Here is a 340-residue protein sequence, read N- to C-terminus: Spermidine synthase 2 (340 aa).

Residues 1–41 (MSSTQEASVTDLPVKRPREAEEDNNGGAMETENGGGEIKEP) form a disordered region. At Ser-2 the chain carries N-acetylserine. The 238-residue stretch at 49–286 (PGWFSEISPM…GVIGFMLCSS (238 aa)) folds into the PABS domain. An S-adenosyl 3-(methylsulfanyl)propylamine-binding site is contributed by Gln-80. Tyr-110 is a putrescine binding site. Residues Gln-111, Asp-135, Glu-155, 186 to 187 (DG), and Asp-205 each bind S-adenosyl 3-(methylsulfanyl)propylamine. Residue Asp-205 is the Proton acceptor of the active site. Putrescine contacts are provided by residues 205–208 (DSSD) and Tyr-274.

The protein belongs to the spermidine/spermine synthase family. Heterodimer. Component of a multiprotein complex. Interacts with SPMS and SPDSYN1.

It carries out the reaction S-adenosyl 3-(methylsulfanyl)propylamine + putrescine = S-methyl-5'-thioadenosine + spermidine + H(+). It participates in amine and polyamine biosynthesis; spermidine biosynthesis; spermidine from putrescine: step 1/1. The protein is Spermidine synthase 2 (SPDSYN2) of Arabidopsis thaliana (Mouse-ear cress).